The primary structure comprises 424 residues: CinA-like protein (424 aa).

It belongs to the CinA family.

The sequence is that of CinA-like protein from Shewanella putrefaciens (strain CN-32 / ATCC BAA-453).